An 809-amino-acid polypeptide reads, in one-letter code: TPR repeat-containing protein TP_0920 (809 aa).

The interval 103–125 (PGEARALPNSEQPEVPASLDSTS) is disordered. TPR repeat units lie at residues 315–348 (LREYLLAGDIACAQHLYDEAEEAFNAALVQDPHC), 383–416 (AFLSNLCGHLALAQNRHEDAAAAYQRAFRLDPHQ), 418–450 (LFALHAAQELSLLGEKEQAIQAYLHAARLFLAQ), 471–504 (TEVRSIAGKLYYATGRHRQAHTQFDALCRAGSAD), 513–550 (LLLREAQGTHEHDAPAAAACEQRARDAFQRACALAPDC), 552–582 (LYHFKYAESLFLSEKDCDEPLARALALDPDN), 583–616 (GWLHNLCAQKALREQNFDAAAQSLQRARALLPHE), 656–689 (GQAFHLLANAFYADGCYEHAAPWYDKALREEPQN), and 723–756 (AHVYTLIALVAAQLGDFPRAELTLQEACTLWPQC).

This chain is TPR repeat-containing protein TP_0920, found in Treponema pallidum (strain Nichols).